The chain runs to 1325 residues: Zinc finger MYM-type protein 6 (1325 aa).

8 consecutive MYM-type zinc fingers follow at residues Gln113 to Val151, Lys163 to Val206, His213 to Pro248, Glu296 to Leu334, Tyr342 to Leu443, Phe451 to Val485, Lys492 to Asn531, and Glu538 to Ile572. Phosphoserine is present on Ser397. The tract at residues Glu665–Ser733 is disordered. A compositionally biased stretch (polar residues) spans Pro695–Pro706.

As to expression, expressed at high levels in heart, skeletal muscle, kidney and liver.

The protein resides in the nucleus. In terms of biological role, plays a role in the regulation of cell morphology and cytoskeletal organization. This Homo sapiens (Human) protein is Zinc finger MYM-type protein 6 (ZMYM6).